The sequence spans 87 residues: Small ribosomal subunit protein bS16 (87 aa).

The protein belongs to the bacterial ribosomal protein bS16 family.

The chain is Small ribosomal subunit protein bS16 from Buchnera aphidicola subsp. Baizongia pistaciae (strain Bp).